The primary structure comprises 198 residues: Protein LKAAEAR1 (198 aa).

The disordered stretch occupies residues 1–47; the sequence is MPTLGVKGARERDKNSASGAGAGAGAGAGAGEKHRKGPRTTDPPKTG. The segment covering 20–30 has biased composition (gly residues); the sequence is AGAGAGAGAGA.

The polypeptide is Protein LKAAEAR1 (Lkaaear1) (Mus musculus (Mouse)).